The following is a 345-amino-acid chain: NADPH dehydrogenase (345 aa).

23-26 (SPMC) is an FMN binding site. Substrate is bound at residue Tyr28. Residues Ala60 and Gln102 each contribute to the FMN site. A substrate-binding site is contributed by 164-167 (HGAH). FMN is bound by residues Arg215 and 307–308 (GR).

The protein belongs to the NADH:flavin oxidoreductase/NADH oxidase family. NamA subfamily. Homotetramer. FMN serves as cofactor.

The catalysed reaction is A + NADPH + H(+) = AH2 + NADP(+). In terms of biological role, catalyzes the reduction of the double bond of an array of alpha,beta-unsaturated aldehydes and ketones. It also reduces the nitro group of nitroester and nitroaromatic compounds. It could have a role in detoxification processes. The chain is NADPH dehydrogenase from Bacillus thuringiensis (strain Al Hakam).